The sequence spans 297 residues: 4-hydroxy-tetrahydrodipicolinate synthase (297 aa).

Thr-55 is a pyruvate binding site. Tyr-144 acts as the Proton donor/acceptor in catalysis. Lys-172 acts as the Schiff-base intermediate with substrate in catalysis. Ile-213 is a binding site for pyruvate.

This sequence belongs to the DapA family. As to quaternary structure, homotetramer; dimer of dimers.

It localises to the cytoplasm. The catalysed reaction is L-aspartate 4-semialdehyde + pyruvate = (2S,4S)-4-hydroxy-2,3,4,5-tetrahydrodipicolinate + H2O + H(+). The protein operates within amino-acid biosynthesis; L-lysine biosynthesis via DAP pathway; (S)-tetrahydrodipicolinate from L-aspartate: step 3/4. Catalyzes the condensation of (S)-aspartate-beta-semialdehyde [(S)-ASA] and pyruvate to 4-hydroxy-tetrahydrodipicolinate (HTPA). The chain is 4-hydroxy-tetrahydrodipicolinate synthase from Lactococcus lactis subsp. lactis (strain IL1403) (Streptococcus lactis).